A 225-amino-acid chain; its full sequence is Ribonuclease 3 (225 aa).

One can recognise an RNase III domain in the interval 5–127 (IDKLERKIGY…IIGAVYLDSD (123 aa)). Glu-40 is a Mg(2+) binding site. The active site involves Asp-44. Positions 113 and 116 each coordinate Mg(2+). The active site involves Glu-116. The DRBM domain occupies 154 to 224 (DPKTRLQEFL…AETALEQLSN (71 aa)).

Belongs to the ribonuclease III family. As to quaternary structure, homodimer. It depends on Mg(2+) as a cofactor.

The protein localises to the cytoplasm. It carries out the reaction Endonucleolytic cleavage to 5'-phosphomonoester.. Its function is as follows. Digests double-stranded RNA. Involved in the processing of primary rRNA transcript to yield the immediate precursors to the large and small rRNAs (23S and 16S). Processes some mRNAs, and tRNAs when they are encoded in the rRNA operon. Processes pre-crRNA and tracrRNA of type II CRISPR loci if present in the organism. The chain is Ribonuclease 3 from Vibrio atlanticus (strain LGP32) (Vibrio splendidus (strain Mel32)).